A 307-amino-acid chain; its full sequence is 3-methyl-2-oxobutanoate hydroxymethyltransferase (307 aa).

Residues D61 and D100 each coordinate Mg(2+). Residues 61 to 62 (DS), D100, and K130 contribute to the 3-methyl-2-oxobutanoate site. E132 serves as a coordination point for Mg(2+). Catalysis depends on E199, which acts as the Proton acceptor.

This sequence belongs to the PanB family. Homodecamer; pentamer of dimers. Mg(2+) serves as cofactor.

Its subcellular location is the cytoplasm. The catalysed reaction is 3-methyl-2-oxobutanoate + (6R)-5,10-methylene-5,6,7,8-tetrahydrofolate + H2O = 2-dehydropantoate + (6S)-5,6,7,8-tetrahydrofolate. It functions in the pathway cofactor biosynthesis; (R)-pantothenate biosynthesis; (R)-pantoate from 3-methyl-2-oxobutanoate: step 1/2. Its function is as follows. Catalyzes the reversible reaction in which hydroxymethyl group from 5,10-methylenetetrahydrofolate is transferred onto alpha-ketoisovalerate to form ketopantoate. The sequence is that of 3-methyl-2-oxobutanoate hydroxymethyltransferase from Nitratidesulfovibrio vulgaris (strain ATCC 29579 / DSM 644 / CCUG 34227 / NCIMB 8303 / VKM B-1760 / Hildenborough) (Desulfovibrio vulgaris).